The following is a 69-amino-acid chain: Small ribosomal subunit protein bS21 (69 aa).

The disordered stretch occupies residues 50-69 (KAFKRKQAKKVRKLKQKTNR).

This sequence belongs to the bacterial ribosomal protein bS21 family.

The chain is Small ribosomal subunit protein bS21 from Borrelia garinii subsp. bavariensis (strain ATCC BAA-2496 / DSM 23469 / PBi) (Borreliella bavariensis).